We begin with the raw amino-acid sequence, 76 residues long: Vasotab (76 aa).

The N-terminal stretch at Met-1–Ala-20 is a signal peptide. In terms of domain architecture, Kazal-like spans Asp-21–Lys-76. 3 cysteine pairs are disulfide-bonded: Cys-23–Cys-60, Cys-27–Cys-53, and Cys-35–Cys-75.

In terms of tissue distribution, expressed by the salivary gland.

It is found in the secreted. In terms of biological role, vasodilator protein that inhibits vasoconstriction of isolated rat femoral artery induced by phenylephrine. Since platelet aggregation and vasoconstriction are key hemostatic responses, particularly in small wounds, this protein likely participates in the antihemostatic responses during blood feeding. Blocks L-type calcium channels (Cav1/CACNA1) in left ventricular myocytes isolated from rat hearts. The polypeptide is Vasotab (Hybomitra bimaculata (Horse fly)).